The following is a 150-amino-acid chain: Large ribosomal subunit protein bL9 (150 aa).

The protein belongs to the bacterial ribosomal protein bL9 family.

In terms of biological role, binds to the 23S rRNA. The chain is Large ribosomal subunit protein bL9 from Leptothrix cholodnii (strain ATCC 51168 / LMG 8142 / SP-6) (Leptothrix discophora (strain SP-6)).